A 596-amino-acid chain; its full sequence is Adenine deaminase (596 aa).

It belongs to the metallo-dependent hydrolases superfamily. Adenine deaminase family. Requires Mn(2+) as cofactor.

The catalysed reaction is adenine + H2O + H(+) = hypoxanthine + NH4(+). This chain is Adenine deaminase, found in Moorella thermoacetica (strain ATCC 39073 / JCM 9320).